The primary structure comprises 131 residues: D-ribose pyranase (131 aa).

Histidine 20 serves as the catalytic Proton donor. Substrate contacts are provided by residues aspartate 28, histidine 98, and 120–122 (YAN).

It belongs to the RbsD / FucU family. RbsD subfamily. Homodecamer.

It localises to the cytoplasm. The enzyme catalyses beta-D-ribopyranose = beta-D-ribofuranose. It functions in the pathway carbohydrate metabolism; D-ribose degradation; D-ribose 5-phosphate from beta-D-ribopyranose: step 1/2. Its function is as follows. Catalyzes the interconversion of beta-pyran and beta-furan forms of D-ribose. The chain is D-ribose pyranase from Clostridium novyi (strain NT).